Here is a 395-residue protein sequence, read N- to C-terminus: S-adenosylmethionine synthase (395 aa).

His16 lines the ATP pocket. Asp18 lines the Mg(2+) pocket. Position 44 (Glu44) interacts with K(+). L-methionine contacts are provided by Glu57 and Gln100. A flexible loop region spans residues 100–110 (QSPDIAQGVDR). Residues 167-169 (DAK), 233-234 (RF), Asp242, 248-249 (RK), Ala265, and Lys269 contribute to the ATP site. Position 242 (Asp242) interacts with L-methionine. Lys273 provides a ligand contact to L-methionine.

It belongs to the AdoMet synthase family. In terms of assembly, homotetramer; dimer of dimers. Requires Mg(2+) as cofactor. K(+) is required as a cofactor.

The protein resides in the cytoplasm. The catalysed reaction is L-methionine + ATP + H2O = S-adenosyl-L-methionine + phosphate + diphosphate. Its pathway is amino-acid biosynthesis; S-adenosyl-L-methionine biosynthesis; S-adenosyl-L-methionine from L-methionine: step 1/1. Its function is as follows. Catalyzes the formation of S-adenosylmethionine (AdoMet) from methionine and ATP. The overall synthetic reaction is composed of two sequential steps, AdoMet formation and the subsequent tripolyphosphate hydrolysis which occurs prior to release of AdoMet from the enzyme. The sequence is that of S-adenosylmethionine synthase from Burkholderia cenocepacia (strain HI2424).